A 389-amino-acid polypeptide reads, in one-letter code: Formate-dependent phosphoribosylglycinamide formyltransferase (389 aa).

N(1)-(5-phospho-beta-D-ribosyl)glycinamide is bound by residues 12 to 13 (EL) and Glu72. Residues Arg104, Lys145, 150–155 (SSGKGQ), 185–188 (EEFI), and Glu193 contribute to the ATP site. In terms of domain architecture, ATP-grasp spans 109 to 301 (DLAAKELGLK…EFELHLRAVL (193 aa)). Glu258 and Glu271 together coordinate Mg(2+). Residues Asp278, Lys350, and 357 to 358 (RR) contribute to the N(1)-(5-phospho-beta-D-ribosyl)glycinamide site.

It belongs to the PurK/PurT family. Homodimer.

The catalysed reaction is N(1)-(5-phospho-beta-D-ribosyl)glycinamide + formate + ATP = N(2)-formyl-N(1)-(5-phospho-beta-D-ribosyl)glycinamide + ADP + phosphate + H(+). It participates in purine metabolism; IMP biosynthesis via de novo pathway; N(2)-formyl-N(1)-(5-phospho-D-ribosyl)glycinamide from N(1)-(5-phospho-D-ribosyl)glycinamide (formate route): step 1/1. Functionally, involved in the de novo purine biosynthesis. Catalyzes the transfer of formate to 5-phospho-ribosyl-glycinamide (GAR), producing 5-phospho-ribosyl-N-formylglycinamide (FGAR). Formate is provided by PurU via hydrolysis of 10-formyl-tetrahydrofolate. This is Formate-dependent phosphoribosylglycinamide formyltransferase from Phocaeicola vulgatus (strain ATCC 8482 / DSM 1447 / JCM 5826 / CCUG 4940 / NBRC 14291 / NCTC 11154) (Bacteroides vulgatus).